Reading from the N-terminus, the 338-residue chain is Citramalyl-CoA lyase, mitochondrial (338 aa).

The transit peptide at 1 to 20 directs the protein to the mitochondrion; that stretch reads MALCVLRNTVRGAAALPRLK. Residues Y48, K55, and K59 each contribute to the substrate site. Residues K55, K59, and K64 each carry the N6-acetyllysine modification. An N6-acetyllysine; alternate mark is found at K80 and K90. Residues K80 and K90 each carry the N6-succinyllysine; alternate modification. Residue R105 participates in substrate binding. Mg(2+) contacts are provided by E169 and D204. 270–271 provides a ligand contact to substrate; that stretch reads IH. K307 carries the post-translational modification N6-succinyllysine. D318 is a catalytic residue.

The protein belongs to the HpcH/HpaI aldolase family. Citrate lyase beta subunit-like subfamily. As to quaternary structure, homotrimer. Requires Mg(2+) as cofactor. In terms of tissue distribution, detected in brown fat, brain, liver, kidney, heart, skeletal muscle and ovary (at protein level).

The protein localises to the mitochondrion. The enzyme catalyses glyoxylate + acetyl-CoA + H2O = (S)-malate + CoA + H(+). The catalysed reaction is propanoyl-CoA + glyoxylate + H2O = 3-methylmalate + CoA + H(+). It catalyses the reaction (3S)-citramalyl-CoA = pyruvate + acetyl-CoA. It carries out the reaction (S)-malyl-CoA + H2O = (S)-malate + CoA + H(+). Its function is as follows. Mitochondrial citramalyl-CoA lyase indirectly involved in the vitamin B12 metabolism. Converts citramalyl-CoA into acetyl-CoA and pyruvate in the C5-dicarboxylate catabolism pathway. The C5-dicarboxylate catabolism pathway is required to detoxify itaconate, a vitamin B12-poisoning metabolite. Also acts as a malate synthase in vitro, converting glyoxylate and acetyl-CoA to malate. Also displays malyl-CoA thioesterase activity. Also acts as a beta-methylmalate synthase in vitro, by mediating conversion of glyoxylate and propionyl-CoA to beta-methylmalate. Also has very weak citramalate synthase activity in vitro. This chain is Citramalyl-CoA lyase, mitochondrial, found in Mus musculus (Mouse).